The sequence spans 632 residues: MDQSKMRRTNQFRKTSQKPPSTGIDSYPTPAQSPMAQHETPMWDFNSLNPYFSMLNMNDGINYARHQQNHIVTSRPPTPLTDLMSLRSFQSFPNVFMPVSRSRTSSFIQSDTDSSRLESDDFSQNVRCFSADIDRSKSYGSSKHYHLKYSRPALSRNSRSFTRSNNVLPTWSLDSNGEMRSRLSLSEVLDSGDLMKFAVDKTGCQFLEKAVKGSLTSYQKFQLFEQVIGRKDDFLKLSTNIFGNYLVQSVIGISLATNDDGYTKRQEKLKNFISSQMTDMCLDKFACRVIQSSLQNMDLSLACKLVQALPRDARLIAICVDQNANHVIQKVVAVIPLKNWEFIVDFVATPEHLRQICSDKYGCRVVQTIIEKLTADSMNVDLTSAAQNLRERALQRLMTSVTNRCQELATNEYANYIIQHIVSNDDLAVYRECIIEKCLMRNLLSLSQEKFASHVVEKAFLHAPLELLAEMMDEIFDGYIPHPDTGKDALDIMMFHQFGNYVVQCMLTICCDAVSGRRQTKEGGYDHAISFQDWLKKLHSRVTKERHRLSRFSSGKKMIETLANLRSTHPIYELQSSGHDSFKTDYFSTASEHDGPELEKNGIEEGSLMLEPRSNKSSVSVKFSSSGSHGDD.

Basic residues predominate over residues 1–11 (MDQSKMRRTNQ). The disordered stretch occupies residues 1–37 (MDQSKMRRTNQFRKTSQKPPSTGIDSYPTPAQSPMAQ). A compositionally biased stretch (polar residues) spans 12–35 (FRKTSQKPPSTGIDSYPTPAQSPM). The region spanning 162 to 566 (TRSNNVLPTW…KMIETLANLR (405 aa)) is the PUM-HD domain. 8 Pumilio repeats span residues 187–225 (EVLD…QLFE), 226–264 (QVIG…GYTK), 271–307 (NFIS…KLVQ), 308–332 (ALPR…QKVV), 345–384 (DFVA…DLTS), 400–436 (SVTN…CIIE), 438–473 (CLMR…EMMD), and 484–521 (DTGK…RQTK). The interval 609-632 (MLEPRSNKSSVSVKFSSSGSHGDD) is disordered. Over residues 615-632 (NKSSVSVKFSSSGSHGDD) the composition is skewed to low complexity.

As to quaternary structure, interacts (via C-terminus) with gld-3 isoform A in an RNA-independent manner. Interacts with dlc-1, and is required for the localization of fbf-2 to P granules. Interacts (via RNA-binding domain) with lst-1, probably displaces bound auto-inhibitory C-terminal tail and alters its RNA-binding affinity. In terms of tissue distribution, expressed specifically in the germline (at protein level).

The protein resides in the cytoplasm. It is found in the cytoplasmic granule. Its function is as follows. RNA-binding protein that binds to the consensus sequence 5'-UGUGCCAUA-3' in mRNA 3'-UTRs. Involved in the control of stem cells and sex determination in the C.elegans hermaphrodite germline. May also play a role in the hermaphrodite germline proliferation and oogenesis. By binding to the 3'-UTR, represses phosphatase lip-1 expression in the distal part of the germline mitotic zone. Binds specifically to the regulatory region of fem-3 3'-UTR and mediates the sperm/oocyte switch. Negatively regulates gld-3 expression possibly by directly binding to two sites within the gld-3 isoform b 3'-UTR. Suppresses germline tumor formation by preventing the dedifferentiation of secondary spermatocytes. C-terminal disordered region probably auto-inhibits RNA binding; auto-inhibition may be reversed by interaction with lst-1. The sequence is that of Fem-3 mRNA-binding factor 2 from Caenorhabditis elegans.